Reading from the N-terminus, the 286-residue chain is Release factor glutamine methyltransferase (286 aa).

Residues 120 to 124, Asp143, Trp172, and Asn187 contribute to the S-adenosyl-L-methionine site; that span reads GTGSG. Residue 187–190 coordinates substrate; that stretch reads NPPY.

This sequence belongs to the protein N5-glutamine methyltransferase family. PrmC subfamily.

The catalysed reaction is L-glutaminyl-[peptide chain release factor] + S-adenosyl-L-methionine = N(5)-methyl-L-glutaminyl-[peptide chain release factor] + S-adenosyl-L-homocysteine + H(+). Methylates the class 1 translation termination release factors RF1/PrfA and RF2/PrfB on the glutamine residue of the universally conserved GGQ motif. The protein is Release factor glutamine methyltransferase of Gloeobacter violaceus (strain ATCC 29082 / PCC 7421).